The chain runs to 722 residues: D-(-)-3-hydroxybutyrate oligomer hydrolase (722 aa).

The N-terminal stretch at 1–25 (MKTMQGKGSGRRLRGALLVTMAASG) is a signal peptide. S319 serves as the catalytic Charge relay system.

Belongs to the D-(-)-3-hydroxybutyrate oligomer hydrolase family.

Its subcellular location is the secreted. The enzyme catalyses (3R)-hydroxybutanoate dimer + H2O = 2 (R)-3-hydroxybutanoate + H(+). The protein operates within lipid metabolism; butanoate metabolism. Inhibited by diisopropylfluorophosphate (DFP). Participates in the degradation of poly-3-hydroxybutyrate (PHB). It works downstream of poly(3-hydroxybutyrate) depolymerase, hydrolyzing D(-)-3-hydroxybutyrate oligomers of various length (3HB-oligomers) into 3HB-monomers. This is D-(-)-3-hydroxybutyrate oligomer hydrolase from Ralstonia pickettii (Burkholderia pickettii).